We begin with the raw amino-acid sequence, 377 residues long: Putative F-box protein At1g70380 (377 aa).

The F-box domain occupies 3 to 48 (NTSFETLALDMQIEILARLPLKYLMRCMCVSKKWASLIRGEDFRSA).

The polypeptide is Putative F-box protein At1g70380 (Arabidopsis thaliana (Mouse-ear cress)).